Reading from the N-terminus, the 81-residue chain is RNA-binding protein Hfq (81 aa).

One can recognise a Sm domain in the interval 10–70; it reads DLFLNSVRKS…ISTIMPSQPV (61 aa).

The protein belongs to the Hfq family. Homohexamer.

Functionally, RNA chaperone that binds small regulatory RNA (sRNAs) and mRNAs to facilitate mRNA translational regulation in response to envelope stress, environmental stress and changes in metabolite concentrations. Also binds with high specificity to tRNAs. This Mesorhizobium japonicum (strain LMG 29417 / CECT 9101 / MAFF 303099) (Mesorhizobium loti (strain MAFF 303099)) protein is RNA-binding protein Hfq.